Consider the following 485-residue polypeptide: Alpha,alpha-trehalose-phosphate synthase [UDP-forming] (485 aa).

2 residues coordinate D-glucose 6-phosphate: Tyr99 and Asp153. UDP-binding residues include Arg290 and Lys295. UDP-alpha-D-glucose is bound by residues Arg290 and Lys295. Arg328 contacts D-glucose 6-phosphate. Residues Ile367 and 393 to 397 contribute to the UDP site; that span reads LVSYE. UDP-alpha-D-glucose is bound by residues Ile367 and 389-397; that span reads DGMNLVSYE.

The protein belongs to the glycosyltransferase 20 family.

The catalysed reaction is D-glucose 6-phosphate + UDP-alpha-D-glucose = alpha,alpha-trehalose 6-phosphate + UDP + H(+). The protein operates within carbohydrate biosynthesis. In terms of biological role, synthase catalytic subunit of the trehalose synthase complex that catalyzes the production of trehalose from glucose-6-phosphate and UDP-alpha-D-glucose in a two step process. This Zygosaccharomyces rouxii protein is Alpha,alpha-trehalose-phosphate synthase [UDP-forming].